We begin with the raw amino-acid sequence, 391 residues long: NAD(P)H-quinone oxidoreductase subunit H, chloroplastic (391 aa).

This sequence belongs to the complex I 49 kDa subunit family. As to quaternary structure, NDH is composed of at least 16 different subunits, 5 of which are encoded in the nucleus.

The protein localises to the plastid. It localises to the chloroplast thylakoid membrane. It carries out the reaction a plastoquinone + NADH + (n+1) H(+)(in) = a plastoquinol + NAD(+) + n H(+)(out). It catalyses the reaction a plastoquinone + NADPH + (n+1) H(+)(in) = a plastoquinol + NADP(+) + n H(+)(out). Its function is as follows. NDH shuttles electrons from NAD(P)H:plastoquinone, via FMN and iron-sulfur (Fe-S) centers, to quinones in the photosynthetic chain and possibly in a chloroplast respiratory chain. The immediate electron acceptor for the enzyme in this species is believed to be plastoquinone. Couples the redox reaction to proton translocation, and thus conserves the redox energy in a proton gradient. This is NAD(P)H-quinone oxidoreductase subunit H, chloroplastic from Nephroselmis olivacea (Green alga).